A 296-amino-acid polypeptide reads, in one-letter code: NADH-cytochrome b5 reductase 2-A (296 aa).

A helical transmembrane segment spans residues 15-35 (FVIGAPTIALCSYYYSSGAFL). Residues 47-151 (NNWIDLPISR…KGPIPKWKWV (105 aa)) enclose the FAD-binding FR-type domain. Position 154 to 189 (154 to 189 (SFESITLIGGGTGITPLYQLIHAITKNPNDKTKIRL)) interacts with FAD.

This sequence belongs to the flavoprotein pyridine nucleotide cytochrome reductase family. The cofactor is FAD.

The protein resides in the mitochondrion outer membrane. It catalyses the reaction 2 Fe(III)-[cytochrome b5] + NADH = 2 Fe(II)-[cytochrome b5] + NAD(+) + H(+). In terms of biological role, may mediate the reduction of outer membrane cytochrome b5. The polypeptide is NADH-cytochrome b5 reductase 2-A (MCR1A) (Vanderwaltozyma polyspora (strain ATCC 22028 / DSM 70294 / BCRC 21397 / CBS 2163 / NBRC 10782 / NRRL Y-8283 / UCD 57-17) (Kluyveromyces polysporus)).